The primary structure comprises 226 residues: Endonuclease V (226 aa).

D43 and D109 together coordinate Mg(2+).

The protein belongs to the endonuclease V family. It depends on Mg(2+) as a cofactor.

It localises to the cytoplasm. It carries out the reaction Endonucleolytic cleavage at apurinic or apyrimidinic sites to products with a 5'-phosphate.. DNA repair enzyme involved in the repair of deaminated bases. Selectively cleaves double-stranded DNA at the second phosphodiester bond 3' to a deoxyinosine leaving behind the intact lesion on the nicked DNA. In Kosmotoga olearia (strain ATCC BAA-1733 / DSM 21960 / TBF 19.5.1), this protein is Endonuclease V.